A 90-amino-acid polypeptide reads, in one-letter code: Probable Fe(2+)-trafficking protein (90 aa).

Belongs to the Fe(2+)-trafficking protein family.

Its function is as follows. Could be a mediator in iron transactions between iron acquisition and iron-requiring processes, such as synthesis and/or repair of Fe-S clusters in biosynthetic enzymes. In Xylella fastidiosa (strain M23), this protein is Probable Fe(2+)-trafficking protein.